A 101-amino-acid polypeptide reads, in one-letter code: Small ribosomal subunit protein uS14 (101 aa).

The disordered stretch occupies residues 44-74 (ASRKLSRLPRDSSPVRLRNRDQVDGRPRGYV). Residues 61-70 (RNRDQVDGRP) are compositionally biased toward basic and acidic residues.

Belongs to the universal ribosomal protein uS14 family. As to quaternary structure, part of the 30S ribosomal subunit. Contacts proteins S3 and S10.

Functionally, binds 16S rRNA, required for the assembly of 30S particles and may also be responsible for determining the conformation of the 16S rRNA at the A site. The polypeptide is Small ribosomal subunit protein uS14 (Cutibacterium acnes (strain DSM 16379 / KPA171202) (Propionibacterium acnes)).